We begin with the raw amino-acid sequence, 353 residues long: Photosystem II D2 protein (353 aa).

Threonine 2 carries the N-acetylthreonine modification. Threonine 2 carries the post-translational modification Phosphothreonine. The chain crosses the membrane as a helical span at residues 41–61; sequence CAYFALGGWFTGTTFVTSWYT. Histidine 118 lines the chlorophyll a pocket. A helical transmembrane segment spans residues 125-141; the sequence is GFMLRQFELARSVQLRP. Pheophytin a-binding residues include glutamine 130 and asparagine 143. A helical transmembrane segment spans residues 153-166; that stretch reads VFVSVFLIYPLGQS. Histidine 198 is a chlorophyll a binding site. The chain crosses the membrane as a helical span at residues 208–228; it reads AALLCAIHGATVENTLFEDGD. A plastoquinone contacts are provided by histidine 215 and phenylalanine 262. Histidine 215 is a Fe cation binding site. Histidine 269 serves as a coordination point for Fe cation. Residues 279-295 form a helical membrane-spanning segment; that stretch reads GLWMSAIGVVGLALNLR.

The protein belongs to the reaction center PufL/M/PsbA/D family. In terms of assembly, PSII is composed of 1 copy each of membrane proteins PsbA, PsbB, PsbC, PsbD, PsbE, PsbF, PsbH, PsbI, PsbJ, PsbK, PsbL, PsbM, PsbT, PsbX, PsbY, PsbZ, Psb30/Ycf12, at least 3 peripheral proteins of the oxygen-evolving complex and a large number of cofactors. It forms dimeric complexes. Requires The D1/D2 heterodimer binds P680, chlorophylls that are the primary electron donor of PSII, and subsequent electron acceptors. It shares a non-heme iron and each subunit binds pheophytin, quinone, additional chlorophylls, carotenoids and lipids. There is also a Cl(-1) ion associated with D1 and D2, which is required for oxygen evolution. The PSII complex binds additional chlorophylls, carotenoids and specific lipids. as cofactor.

It localises to the plastid. Its subcellular location is the chloroplast thylakoid membrane. The catalysed reaction is 2 a plastoquinone + 4 hnu + 2 H2O = 2 a plastoquinol + O2. Functionally, photosystem II (PSII) is a light-driven water:plastoquinone oxidoreductase that uses light energy to abstract electrons from H(2)O, generating O(2) and a proton gradient subsequently used for ATP formation. It consists of a core antenna complex that captures photons, and an electron transfer chain that converts photonic excitation into a charge separation. The D1/D2 (PsbA/PsbD) reaction center heterodimer binds P680, the primary electron donor of PSII as well as several subsequent electron acceptors. D2 is needed for assembly of a stable PSII complex. The chain is Photosystem II D2 protein from Cycas taitungensis (Prince sago).